Consider the following 338-residue polypeptide: Transcription factor AP-4 (338 aa).

Residues 48-99 (IRREIANSNERRRMQSINAGFQSLKTLIPHTDGEKLSKAAILQQTAEYIFSL) enclose the bHLH domain. The tract at residues 100–120 (EQEKTRLLQQNTQLKRFIQEL) is leucine-zipper 1. The interval 118–141 (QELSGSSPKRRRAEDKDEGIGSPD) is disordered. Phosphoserine occurs at positions 123, 124, and 139. Residue lysine 147 forms a Glycyl lysine isopeptide (Lys-Gly) (interchain with G-Cter in SUMO2) linkage. Positions 151 to 179 (LRREMIELRQQLDKERSVRMMLEEQVRSL) are leucine-zipper 2. Glycyl lysine isopeptide (Lys-Gly) (interchain with G-Cter in SUMO2) cross-links involve residues lysine 187, lysine 189, and lysine 285. A compositionally biased stretch (basic and acidic residues) spans 283 to 294 (QEKQELEEEQRR). The disordered stretch occupies residues 283–338 (QEKQELEEEQRRAVIVKPVRSCPEAPTSDTASDSEASDSDAMDQSREEPSGDGELP).

In terms of assembly, efficient DNA binding requires dimerization with another bHLH protein. Homodimer.

It localises to the nucleus. Transcription factor that activates both viral and cellular genes by binding to the symmetrical DNA sequence 5'-CAGCTG-3'. This Homo sapiens (Human) protein is Transcription factor AP-4 (TFAP4).